We begin with the raw amino-acid sequence, 379 residues long: Muconate cycloisomerase 1-1 (379 aa).

The active site involves lysine 169. Residues aspartate 198, glutamate 224, and aspartate 247 each coordinate Mn(2+).

This sequence belongs to the mandelate racemase/muconate lactonizing enzyme family. Homooctamer. Requires Mn(2+) as cofactor.

It carries out the reaction (S)-muconolactone = cis,cis-muconate + H(+). It participates in aromatic compound metabolism; beta-ketoadipate pathway; 5-oxo-4,5-dihydro-2-furylacetate from catechol: step 2/3. Functionally, catalyzes a syn cycloisomerization. This Acinetobacter lwoffii protein is Muconate cycloisomerase 1-1 (catB1).